The following is a 457-amino-acid chain: Multidrug resistance protein MdtK (457 aa).

12 helical membrane-spanning segments follow: residues 11–31, 46–66, 93–113, 127–147, 160–180, 188–208, 243–263, 278–300, 316–336, 350–370, 387–407, and 418–438; these read LLALAIPVVIAQLSQTAMGVV, AVAVGTSIWLPAILFGHGLLL, WLAFCVSVLIMVVIYNSDHII, AVGFLHAIMWGAPGYLFFQVL, GMVIGFIGLLVNIPINYIFIY, LGGVGCGVATGTVYWVMFLMM, LPVALALFFEVTLFAVVALLV, LNFSSLMFMLPMSLSVAATIRVG, YTSIAVGLMLACVTAIFTVVF, VVVMASHLMLLAALYQLSDAI, IFFITFTAYWLLGLPSGYLLG, and PSGFWIGFVIGLTSAAILMAL.

Belongs to the multi antimicrobial extrusion (MATE) (TC 2.A.66.1) family. MdtK subfamily.

Its subcellular location is the cell inner membrane. Multidrug efflux pump that functions probably as a Na(+)/drug antiporter. The protein is Multidrug resistance protein MdtK of Yersinia enterocolitica serotype O:8 / biotype 1B (strain NCTC 13174 / 8081).